Reading from the N-terminus, the 263-residue chain is Endonuclease 8 (263 aa).

Proline 2 serves as the catalytic Schiff-base intermediate with DNA. The active-site Proton donor is the glutamate 3. The active-site Proton donor; for beta-elimination activity is the lysine 53. Positions 70, 125, and 169 each coordinate DNA. An FPG-type zinc finger spans residues 229-263 (KVFHRDGELCERCGGIIEKTTLSSRPFYWCPGCQH). Residue arginine 253 is the Proton donor; for delta-elimination activity of the active site.

It belongs to the FPG family. Zn(2+) serves as cofactor.

The enzyme catalyses 2'-deoxyribonucleotide-(2'-deoxyribose 5'-phosphate)-2'-deoxyribonucleotide-DNA = a 3'-end 2'-deoxyribonucleotide-(2,3-dehydro-2,3-deoxyribose 5'-phosphate)-DNA + a 5'-end 5'-phospho-2'-deoxyribonucleoside-DNA + H(+). Functionally, involved in base excision repair of DNA damaged by oxidation or by mutagenic agents. Acts as a DNA glycosylase that recognizes and removes damaged bases. Has a preference for oxidized pyrimidines, such as thymine glycol, 5,6-dihydrouracil and 5,6-dihydrothymine. Has AP (apurinic/apyrimidinic) lyase activity and introduces nicks in the DNA strand. Cleaves the DNA backbone by beta-delta elimination to generate a single-strand break at the site of the removed base with both 3'- and 5'-phosphates. The protein is Endonuclease 8 of Shigella boydii serotype 4 (strain Sb227).